Here is a 193-residue protein sequence, read N- to C-terminus: Anthranilate synthase component 2 (193 aa).

In terms of domain architecture, Glutamine amidotransferase type-1 spans 3–193 (DILLLDNVDS…EQTLAWALAK (191 aa)). Residue 57-59 (GPG) coordinates L-glutamine. Cysteine 84 serves as the catalytic Nucleophile; for GATase activity. Residues glutamine 88 and 134 to 135 (SL) contribute to the L-glutamine site. Active-site for GATase activity residues include histidine 170 and glutamate 172.

Heterotetramer consisting of two non-identical subunits: a beta subunit (TrpG) and a large alpha subunit (TrpE).

It carries out the reaction chorismate + L-glutamine = anthranilate + pyruvate + L-glutamate + H(+). The protein operates within amino-acid biosynthesis; L-tryptophan biosynthesis; L-tryptophan from chorismate: step 1/5. Its function is as follows. Part of a heterotetrameric complex that catalyzes the two-step biosynthesis of anthranilate, an intermediate in the biosynthesis of L-tryptophan. In the first step, the glutamine-binding beta subunit (TrpG) of anthranilate synthase (AS) provides the glutamine amidotransferase activity which generates ammonia as a substrate that, along with chorismate, is used in the second step, catalyzed by the large alpha subunit of AS (TrpE) to produce anthranilate. In the absence of TrpG, TrpE can synthesize anthranilate directly from chorismate and high concentrations of ammonia. The polypeptide is Anthranilate synthase component 2 (trpG) (Serratia marcescens).